Reading from the N-terminus, the 552-residue chain is MRPIDDSSLTWDDGALVTVDQRGLPHEARPLRLRTADQIIDAIKTLAIRGAPAIGIAGAFAVVLATRAHTRDGIVDVAAVRAEADRIAAARPTAVNLAWAVDRVRPRIAEGADAVLAETLDMLAEDGRVNRAAATHAADLVQRLCGPRPLRVLTHCNTGRLATSAFGTAIGALRVLAERGAVEEVLVDETRPLLQGARLTTWELAEAGIPHRLTIDSAAAWAMATGLVDCVLVGADRVTARGDVANKIGTYAVALAAHRHGIPFVVVAPESTRDPATASWRDIVVEERAAEEVTAFAGSATAPVGTAAFNPAFDVTPADLVTAVVTEHGVVHGTVAAEPGARIAATARELYARGWMPGTAGNLSVRTGDTAVVTASGLAKGELSATDMVRVAIADSTPLPGQDRRPSAETTIHTAVYRATGAAAVVHVHSPFATALATRAGAADEVRVLRITDYELIKGLGGSDPTAIDLAIFPNWRDVPRIAADIERRLAEHPGAPPVLCIAGHGITTWGENLTQARDRAECLEAVCELVLRTGREHAFAPQTHVLEMGPT.

The tract at residues 1–333 (MRPIDDSSLT…VVTEHGVVHG (333 aa)) is methylthioribose-1-phosphate isomerase activity. Substrate contacts are provided by residues 49–51 (RGA), R91, and Q195. D236 acts as the Proton donor in catalysis. 246 to 247 (NK) serves as a coordination point for substrate. Residues 334–535 (TVAAEPGARI…AVCELVLRTG (202 aa)) form a methylthioribulose-1-phosphate dehydratase activity region. The Zn(2+) site is built by H427 and H429.

In the N-terminal section; belongs to the eIF-2B alpha/beta/delta subunits family. MtnA subfamily. This sequence in the C-terminal section; belongs to the aldolase class II family. MtnB subfamily. The cofactor is Zn(2+).

It carries out the reaction 5-(methylsulfanyl)-alpha-D-ribose 1-phosphate = 5-(methylsulfanyl)-D-ribulose 1-phosphate. The enzyme catalyses 5-(methylsulfanyl)-D-ribulose 1-phosphate = 5-methylsulfanyl-2,3-dioxopentyl phosphate + H2O. Its pathway is amino-acid biosynthesis; L-methionine biosynthesis via salvage pathway; L-methionine from S-methyl-5-thio-alpha-D-ribose 1-phosphate: step 1/6. It participates in amino-acid biosynthesis; L-methionine biosynthesis via salvage pathway; L-methionine from S-methyl-5-thio-alpha-D-ribose 1-phosphate: step 2/6. Bifunctional protein that catalyzes the interconversion of methylthioribose-1-phosphate (MTR-1-P) into methylthioribulose-1-phosphate (MTRu-1-P), and the dehydration of methylthioribulose-1-phosphate (MTRu-1-P) into 2,3-diketo-5-methylthiopentyl-1-phosphate (DK-MTP-1-P). This chain is Probable bifunctional methylthioribose-1-phosphate isomerase/methylthioribulose-1-phosphate dehydratase (mtnAB), found in Nocardia farcinica (strain IFM 10152).